Consider the following 254-residue polypeptide: 3-deoxy-manno-octulosonate cytidylyltransferase (254 aa).

Belongs to the KdsB family.

It is found in the cytoplasm. It carries out the reaction 3-deoxy-alpha-D-manno-oct-2-ulosonate + CTP = CMP-3-deoxy-beta-D-manno-octulosonate + diphosphate. It functions in the pathway nucleotide-sugar biosynthesis; CMP-3-deoxy-D-manno-octulosonate biosynthesis; CMP-3-deoxy-D-manno-octulosonate from 3-deoxy-D-manno-octulosonate and CTP: step 1/1. The protein operates within bacterial outer membrane biogenesis; lipopolysaccharide biosynthesis. Functionally, activates KDO (a required 8-carbon sugar) for incorporation into bacterial lipopolysaccharide in Gram-negative bacteria. In Chlamydia trachomatis serovar A (strain ATCC VR-571B / DSM 19440 / HAR-13), this protein is 3-deoxy-manno-octulosonate cytidylyltransferase.